The following is a 940-amino-acid chain: MASISDDGMVLSGYHKKLKTMKKKFFVLYEETSINQARLEYYDTEKKFLQRAEPKRVIYLKDCFNINRRLDTKHRFVIVLSSREGGFGIVLESENDLRKWLDKLLLLQRNIANVNGQVYSAYEHVWQVIIQKKGMSEKVGITGTYHCCLSAKSLTFVCIGPEKTANGDDRISSIEILLTTIRRCGHASPQCIFYMELGRQSVLGSGELWMETDNAAIATNMHNTILSAMSAKTDSNTNLINVYQARPDISHEPMRKRSSSANEASKPINVIQNRQNSLELRNCSSPHNYGFPRERCDSLPTRNGTLSESSNQSYFGSNLGLRSNTISGIRPHSTSKHSNSPTFNMPLRCSESEDSSISIDESDDNASFGHYRLNTRSSKGAIPEENLDDFASAEYCKGSGPSGDDNYIPMTPIKPASFCEPDKVELPKPDDPNLHINFPEHTSEKLENDFDLDSDNQCGRPIRAYSIGNKVEHLKLNRRLGYLNDTGQNSNRVRAYSVGSKSKIPRCDLQRVVLVEDNRFDTNRSQNNISKEGPISGTSTNREKKSTSAPLLSLKNQINQDRMSDLMEIDFSQSSKIEPWTPAQFKRNVMDVVPKNIESVFPKSYRNDSSNLTLHATSQKDIFNGGKLNTTESSSEGGYLEMKPVGNAFSSSPVTLPSKIEKLKLKDNTELPVHELHKVSSYNIPPEKRKEQTPTQTRIEEKTLNSQLNEKLINTESANVVANITPNVPELKSDKKNNVESLIIENNNWDLGTTDEKKLVHSISSEDYTQIKDKLNDLTKNNEVGYKILQIKSDSSLISSKITLKNRLRDNLERQQRLTESVNTIPDKSPSATTKGTFYSLGNNFQTPPNNVVNNTLDNILQTKDLNFPSRPSSQASQPELHYAKLDLPNCSDQNPAKYLKRGSRESPPVATCAEDGNTYARIDFDQSDSSSSSSKIFNM.

A PH domain is found at 8–109; it reads GMVLSGYHKK…WLDKLLLLQR (102 aa). In terms of domain architecture, IRS-type PTB spans 122 to 236; the sequence is YEHVWQVIIQ…SAMSAKTDSN (115 aa). Residues serine 284, serine 285, and serine 340 each carry the phosphoserine modification. Tyrosine 407 carries the post-translational modification Phosphotyrosine; by INSR. Positions 407–410 match the YXXM motif 1 motif; sequence YIPM. Residues 523-540 show a composition bias toward polar residues; it reads NRSQNNISKEGPISGTST. The tract at residues 523-549 is disordered; sequence NRSQNNISKEGPISGTSTNREKKSTSA. Serine 548 carries the post-translational modification Phosphoserine. A YXXM motif 2 motif is present at residues 639–642; it reads YLEM. Phosphotyrosine; by INSR is present on tyrosine 883. Residues 895 to 915 are disordered; it reads NPAKYLKRGSRESPPVATCAE. Phosphoserine occurs at positions 904 and 907. Tyrosine 920 carries the post-translational modification Phosphotyrosine; by INSR.

In terms of assembly, bindings to phosphatidylinositol 3-kinase and SHP2.

Its function is as follows. Activates phosphatidylinositol 3-kinase when bound to the regulatory p85 subunit. May mediate the control of various cellular processes by insulin-like peptides. When phosphorylated by the insulin receptor binds specifically to various cellular proteins containing SH2 domains. Involved in control of cell proliferation, cell size, and body and organ growth throughout development. Also has a role in a signaling pathway controlling the physiological response required to endure periods of low nutrient conditions. Insulin/insulin-like growth factor (IGF) signaling pathway has a role in regulating aging and is necessary in the ovary for vitellogenic maturation. In Drosophila ananassae (Fruit fly), this protein is Insulin receptor substrate 1.